A 492-amino-acid chain; its full sequence is Target of Myb1 membrane trafficking protein (492 aa).

Met-1 carries the N-acetylmethionine modification. A Phosphoserine modification is found at Ser-11. Residues 20-152 (ATDGSLQSED…DLRRKGLEFP (133 aa)) enclose the VHS domain. Residues 48 to 56 (KDAFRAVKK) carry the KRKK motif. Ser-160 bears the Phosphoserine mark. Thr-164 is modified (phosphothreonine). Residues 167–195 (RTVFNSETPSRQNSVSSNTSQRGDLSQHA) are compositionally biased toward polar residues. Positions 167 to 215 (RTVFNSETPSRQNSVSSNTSQRGDLSQHATPLPTPAVLPGDSPITPTPE) are disordered. 3 positions are modified to phosphoserine: Ser-176, Ser-180, and Ser-208. Residues 215–303 (EQIGKLRSEL…VFLRHERFER (89 aa)) enclose the GAT domain. The tract at residues 321 to 326 (DLIDMG) is clathrin box. 2 positions are modified to phosphoserine: Ser-355 and Ser-376. Lys-385 is covalently cross-linked (Glycyl lysine isopeptide (Lys-Gly) (interchain with G-Cter in SUMO2)). The segment at 392-463 (TDGLAGALDA…ADRLPNLASP (72 aa)) is interaction with MYO6. The segment at 450–492 (RAKAADRLPNLASPSAEGPPRPSPGTAPRRKTQEKDDDMLFAL) is disordered. Residue Ser-462 is modified to Phosphoserine.

It belongs to the TOM1 family. Found in a complex with TOLLIP; interacts (via GAT domain) with TOLLIP (via N-terminus); the interactions leads to TOM1-recruitment to endosomes and inhibition of TOLLIP binding to PtdIns(3)P. Interacts (via GAT domain and the C-terminal part of the VHS domain) with UBC/ubiquitin. Interacts (via clathrin box and C-terminus) with clathrin heavy chain. Interacts with MYO6. Interacts with TAX1BP1; CALCOCO2/NDP52 and OPTN; the interaction is indirect and is mediated by MYO6, which acts as a bridge between TOM1 and the three autophagy receptors. Interacts (via C-terminus) with ZFYVE16 (via C-terminus); interaction is required to target TOM1 and clathrin to endosomes. Interacts with LRBA. In terms of processing, monoubiquitinated. Ubiquitous. In adult brain, it is highly expressed at the mesencephalic level, in the hippocampal formation and medial lemniscus. In cerebellum, it is highly expressed in Purkinje cells and granular layers.

Its subcellular location is the cytoplasm. It localises to the endosome membrane. The protein localises to the early endosome membrane. Adapter protein that plays a role in the intracellular membrane trafficking of ubiquitinated proteins, thereby participating in autophagy, ubiquitination-dependent signaling and receptor recycling pathways. Acts as a MYO6/Myosin VI adapter protein that targets MYO6 to endocytic structures. Together with MYO6, required for autophagosomal delivery of endocytic cargo, the maturation of autophagosomes and their fusion with lysosomes. MYO6 links TOM1 with autophagy receptors, such as TAX1BP1; CALCOCO2/NDP52 and OPTN. Binds to polyubiquitinated proteins via its GAT domain. In a complex with TOLLIP, recruits ubiquitin-conjugated proteins onto early endosomes. The Tom1-Tollip complex may regulate endosomal trafficking by linking polyubiquitinated proteins to clathrin. Mediates clathrin recruitment to early endosomes by ZFYVE16. Modulates binding of TOLLIP to phosphatidylinositol 3-phosphate (PtdIns(3)P) via binding competition; the association with TOLLIP may favor the release of TOLLIP from endosomal membranes, allowing TOLLIP to commit to cargo trafficking. Acts as a phosphatidylinositol 5-phosphate (PtdIns(5)P) effector by binding to PtdIns(5)P, thereby regulating endosomal maturation. PtdIns(5)P-dependent recruitment to signaling endosomes may block endosomal maturation. Also inhibits Toll-like receptor (TLR) signaling and participates in immune receptor recycling. In Mus musculus (Mouse), this protein is Target of Myb1 membrane trafficking protein.